The chain runs to 247 residues: Flavin-dependent thymidylate synthase (247 aa).

The region spanning 1 to 237 (MDVKLLEATD…PKTFEYYEQE (237 aa)) is the ThyX domain. DUMP is bound by residues 85-88 (QITR), 98-100 (SMR), and Arg176. FAD is bound at residue 88–90 (RHR). A ThyX motif motif is present at residues 88–98 (RHRHVSFDVQS). Residues 192–194 (NAR) and His198 contribute to the FAD site. Arg203 lines the dUMP pocket. Residue Arg203 is the Involved in ionization of N3 of dUMP, leading to its activation of the active site.

This sequence belongs to the thymidylate synthase ThyX family. Homotetramer. It depends on FAD as a cofactor.

It catalyses the reaction dUMP + (6R)-5,10-methylene-5,6,7,8-tetrahydrofolate + NADPH + H(+) = dTMP + (6S)-5,6,7,8-tetrahydrofolate + NADP(+). It functions in the pathway pyrimidine metabolism; dTTP biosynthesis. Its function is as follows. Catalyzes the reductive methylation of 2'-deoxyuridine-5'-monophosphate (dUMP) to 2'-deoxythymidine-5'-monophosphate (dTMP) while utilizing 5,10-methylenetetrahydrofolate (mTHF) as the methyl donor, and NADPH and FADH(2) as the reductant. This Haloarcula marismortui (strain ATCC 43049 / DSM 3752 / JCM 8966 / VKM B-1809) (Halobacterium marismortui) protein is Flavin-dependent thymidylate synthase.